Consider the following 212-residue polypeptide: MKPYTQTTGLVAPLDRANVDTDQIIPKQFLKSIKRTGFGPNLFDEWRYLDVGQPGQNNSKRPLNPDFVLNQPRYQGASVLLARENFGCGSSREHAPWALDEYGFRTVIAPSYADIFFNNSFKNGLLPIILPEAEVDELFRQVEANEGYQLSIDLAAQTVTRPDGKVLGFEVDPFRKHCLLNGLDDIGLTLQDADAIRAFEDGYRQQQPWLFR.

This sequence belongs to the LeuD family. LeuD type 1 subfamily. In terms of assembly, heterodimer of LeuC and LeuD.

It catalyses the reaction (2R,3S)-3-isopropylmalate = (2S)-2-isopropylmalate. It functions in the pathway amino-acid biosynthesis; L-leucine biosynthesis; L-leucine from 3-methyl-2-oxobutanoate: step 2/4. Functionally, catalyzes the isomerization between 2-isopropylmalate and 3-isopropylmalate, via the formation of 2-isopropylmaleate. The polypeptide is 3-isopropylmalate dehydratase small subunit (Pseudomonas aeruginosa (strain UCBPP-PA14)).